The primary structure comprises 485 residues: Glutamyl-tRNA(Gln) amidotransferase subunit A (485 aa).

Catalysis depends on charge relay system residues K79 and S154. S178 serves as the catalytic Acyl-ester intermediate.

The protein belongs to the amidase family. GatA subfamily. As to quaternary structure, heterotrimer of A, B and C subunits.

The enzyme catalyses L-glutamyl-tRNA(Gln) + L-glutamine + ATP + H2O = L-glutaminyl-tRNA(Gln) + L-glutamate + ADP + phosphate + H(+). Its function is as follows. Allows the formation of correctly charged Gln-tRNA(Gln) through the transamidation of misacylated Glu-tRNA(Gln) in organisms which lack glutaminyl-tRNA synthetase. The reaction takes place in the presence of glutamine and ATP through an activated gamma-phospho-Glu-tRNA(Gln). The polypeptide is Glutamyl-tRNA(Gln) amidotransferase subunit A (Clostridium botulinum (strain Alaska E43 / Type E3)).